The primary structure comprises 504 residues: D-alanine--D-alanyl carrier protein ligase (504 aa).

152–153 (TS) contributes to the ATP binding site. Position 197 (Asp197) interacts with D-alanine. 292 to 297 (NTYGPT) lines the ATP pocket. Val301 contributes to the D-alanine binding site. ATP is bound by residues Asp383, 394–397 (YNGR), and Lys492. A D-alanine-binding site is contributed by Lys492.

This sequence belongs to the ATP-dependent AMP-binding enzyme family. DltA subfamily.

Its subcellular location is the cytoplasm. It carries out the reaction holo-[D-alanyl-carrier protein] + D-alanine + ATP = D-alanyl-[D-alanyl-carrier protein] + AMP + diphosphate. It functions in the pathway cell wall biogenesis; lipoteichoic acid biosynthesis. Catalyzes the first step in the D-alanylation of lipoteichoic acid (LTA), the activation of D-alanine and its transfer onto the D-alanyl carrier protein (Dcp) DltC. In an ATP-dependent two-step reaction, forms a high energy D-alanyl-AMP intermediate, followed by transfer of the D-alanyl residue as a thiol ester to the phosphopantheinyl prosthetic group of the Dcp. D-alanylation of LTA plays an important role in modulating the properties of the cell wall in Gram-positive bacteria, influencing the net charge of the cell wall. The protein is D-alanine--D-alanyl carrier protein ligase of Bacillus thuringiensis (strain Al Hakam).